Consider the following 398-residue polypeptide: L-glutamine--4-(methylsulfanyl)-2-oxobutanoate aminotransferase (398 aa).

N6-(pyridoxal phosphate)lysine is present on Lys240.

It belongs to the class-I pyridoxal-phosphate-dependent aminotransferase family. MtnE subfamily. Pyridoxal 5'-phosphate is required as a cofactor.

The catalysed reaction is 4-methylsulfanyl-2-oxobutanoate + L-glutamine = 2-oxoglutaramate + L-methionine. The protein operates within amino-acid biosynthesis; L-methionine biosynthesis via salvage pathway; L-methionine from S-methyl-5-thio-alpha-D-ribose 1-phosphate: step 6/6. In terms of biological role, involved in the methylthioribose (MTR) recycling pathway. Catalyzes the formation of methionine from 2-keto-4-methylthiobutyrate (KMTB). The chain is L-glutamine--4-(methylsulfanyl)-2-oxobutanoate aminotransferase from Bacillus subtilis (strain 168).